A 102-amino-acid chain; its full sequence is Anti-lipopolysaccharide factor (102 aa).

The cysteines at positions 32 and 53 are disulfide-linked.

In terms of biological role, binds tightly to LPS and thus specifically inhibits the LPS-mediated activation of the hemolymph coagulation. It has a strong antibacterial effect especially on the growth of Gram-negative bacteria. This chain is Anti-lipopolysaccharide factor, found in Tachypleus tridentatus (Japanese horseshoe crab).